The sequence spans 597 residues: Phosphoinositide phospholipase C 4 (597 aa).

Residues 26–60 form the EF-hand domain; it reads GPVEDVRDLFEKYTEGDAHMSPEQLQKLMTEEGGE. A PI-PLC X-box domain is found at 114-257; sequence QNMDAPLSHY…LKEKILISTK (144 aa). Residues His129 and His174 contribute to the active site. The span at 259–290 shows a compositional bias: basic and acidic residues; that stretch reads PKEYLEANDTKEKDNGEKGKDSDEDVWGKEPE. The tract at residues 259-324 is disordered; it reads PKEYLEANDT…ERGSCESDTS (66 aa). The span at 293-309 shows a compositional bias: polar residues; sequence ISTQSDLDKVTSSVNDL. The PI-PLC Y-box domain occupies 333–449; the sequence is KRLIAIHAGK…GYVKKPDFLM (117 aa). The C2 domain maps to 449-579; that stretch reads MDASPNGQDF…QGIRAVPLFN (131 aa).

Ca(2+) is required as a cofactor. As to expression, low expression in leaves, roots, flowers and siliques. Expressed in pollen and in cells of the stigma surface.

It is found in the cytoplasm. The protein resides in the cytosol. Its subcellular location is the cell membrane. The catalysed reaction is a 1,2-diacyl-sn-glycero-3-phospho-(1D-myo-inositol-4,5-bisphosphate) + H2O = 1D-myo-inositol 1,4,5-trisphosphate + a 1,2-diacyl-sn-glycerol + H(+). Its function is as follows. The production of the second messenger molecules diacylglycerol (DAG) and inositol 1,4,5-trisphosphate (IP3) is mediated by activated phosphatidylinositol-specific phospholipase C enzymes. In Arabidopsis thaliana (Mouse-ear cress), this protein is Phosphoinositide phospholipase C 4 (PLC4).